A 188-amino-acid chain; its full sequence is Elongation factor P (188 aa).

Residue Lys34 is modified to N6-(3,6-diaminohexanoyl)-5-hydroxylysine.

The protein belongs to the elongation factor P family. Post-translationally, may be beta-lysylated on the epsilon-amino group of Lys-34 by the combined action of EpmA and EpmB, and then hydroxylated on the C5 position of the same residue by EpmC (if this protein is present). Lysylation is critical for the stimulatory effect of EF-P on peptide-bond formation. The lysylation moiety may extend toward the peptidyltransferase center and stabilize the terminal 3-CCA end of the tRNA. Hydroxylation of the C5 position on Lys-34 may allow additional potential stabilizing hydrogen-bond interactions with the P-tRNA.

It is found in the cytoplasm. Its pathway is protein biosynthesis; polypeptide chain elongation. In terms of biological role, involved in peptide bond synthesis. Alleviates ribosome stalling that occurs when 3 or more consecutive Pro residues or the sequence PPG is present in a protein, possibly by augmenting the peptidyl transferase activity of the ribosome. Modification of Lys-34 is required for alleviation. The protein is Elongation factor P of Stenotrophomonas maltophilia (strain R551-3).